The primary structure comprises 24 residues: GIKDWIKGAAKKLIKTVASHIANQ.

As to expression, expressed by the skin glands.

It is found in the secreted. Its function is as follows. Antimicrobial peptide. Synthetic peptide shows higher potency against Gram-negative bacteria than against Gram-positive bacteria. Has a very week hemolytic activity. The sequence is that of Ascaphin-5 from Ascaphus truei (Coastal tailed frog).